Here is a 150-residue protein sequence, read N- to C-terminus: MLGAALRRCAVAAAARAGPRGLLHSAPTPGPAAAIQSVRCYSHGSSETDEEFDARWVTYFNKPDIDAWELRKGINTLVTYDLVPEPKIIDAALRACRRLNDFASTVRILEAVKDKAGPHKEIYPYVIQELRPTLNELGISTPEELGLDKV.

Residues 1–41 constitute a mitochondrion transit peptide; sequence MLGAALRRCAVAAAARAGPRGLLHSAPTPGPAAAIQSVRCY. Residues 2-17 carry the SIFI-degron motif; sequence LGAALRRCAVAAAARA. Lys87 and Lys113 each carry N6-acetyllysine. Position 141 is a phosphothreonine (Thr141).

It belongs to the cytochrome c oxidase subunit 5A family. As to quaternary structure, component of the cytochrome c oxidase (complex IV, CIV), a multisubunit enzyme composed of 14 subunits. The complex is composed of a catalytic core of 3 subunits MT-CO1, MT-CO2 and MT-CO3, encoded in the mitochondrial DNA, and 11 supernumerary subunits COX4I, COX5A, COX5B, COX6A, COX6B, COX6C, COX7A, COX7B, COX7C, COX8 and NDUFA4, which are encoded in the nuclear genome. The complex exists as a monomer or a dimer and forms supercomplexes (SCs) in the inner mitochondrial membrane with NADH-ubiquinone oxidoreductase (complex I, CI) and ubiquinol-cytochrome c oxidoreductase (cytochrome b-c1 complex, complex III, CIII), resulting in different assemblies (supercomplex SCI(1)III(2)IV(1) and megacomplex MCI(2)III(2)IV(2)). Interacts with AFG1L. Interacts with RAB5IF. Post-translationally, in response to mitochondrial stress, the precursor protein is ubiquitinated by the SIFI complex in the cytoplasm before mitochondrial import, leading to its degradation. Within the SIFI complex, UBR4 initiates ubiquitin chain that are further elongated or branched by KCMF1.

Its subcellular location is the mitochondrion inner membrane. It participates in energy metabolism; oxidative phosphorylation. In terms of biological role, component of the cytochrome c oxidase, the last enzyme in the mitochondrial electron transport chain which drives oxidative phosphorylation. The respiratory chain contains 3 multisubunit complexes succinate dehydrogenase (complex II, CII), ubiquinol-cytochrome c oxidoreductase (cytochrome b-c1 complex, complex III, CIII) and cytochrome c oxidase (complex IV, CIV), that cooperate to transfer electrons derived from NADH and succinate to molecular oxygen, creating an electrochemical gradient over the inner membrane that drives transmembrane transport and the ATP synthase. Cytochrome c oxidase is the component of the respiratory chain that catalyzes the reduction of oxygen to water. Electrons originating from reduced cytochrome c in the intermembrane space (IMS) are transferred via the dinuclear copper A center (CU(A)) of subunit 2 and heme A of subunit 1 to the active site in subunit 1, a binuclear center (BNC) formed by heme A3 and copper B (CU(B)). The BNC reduces molecular oxygen to 2 water molecules using 4 electrons from cytochrome c in the IMS and 4 protons from the mitochondrial matrix. The protein is Cytochrome c oxidase subunit 5A, mitochondrial (COX5A) of Plecturocebus donacophilus (Bolivian gray titi monkey).